A 369-amino-acid chain; its full sequence is Endo-1,4-beta-xylanase A (369 aa).

The N-terminal stretch at 1 to 20 (MRKLTQFCLGLMLLPIAAVA) is a signal peptide. In terms of domain architecture, GH10 spans 21-367 (QNQPTMKDVL…KPVVKEIIKL (347 aa)). The active-site Proton donor is Glu-156. Residue Glu-261 is the Nucleophile of the active site.

It belongs to the glycosyl hydrolase 10 (cellulase F) family.

It carries out the reaction Endohydrolysis of (1-&gt;4)-beta-D-xylosidic linkages in xylans.. Its pathway is glycan degradation; xylan degradation. The polypeptide is Endo-1,4-beta-xylanase A (xynA) (Xylanibacter ruminicola (Prevotella ruminicola)).